The chain runs to 113 residues: Protein suex-1 (113 aa).

A signal peptide spans 1–22 (MQSLLVFCLATIILSNFTEASA).

The chain is Protein suex-1 from Caenorhabditis elegans.